The primary structure comprises 120 residues: Ribonuclease P protein component (120 aa).

Belongs to the RnpA family. As to quaternary structure, consists of a catalytic RNA component (M1 or rnpB) and a protein subunit.

The catalysed reaction is Endonucleolytic cleavage of RNA, removing 5'-extranucleotides from tRNA precursor.. RNaseP catalyzes the removal of the 5'-leader sequence from pre-tRNA to produce the mature 5'-terminus. It can also cleave other RNA substrates such as 4.5S RNA. The protein component plays an auxiliary but essential role in vivo by binding to the 5'-leader sequence and broadening the substrate specificity of the ribozyme. The sequence is that of Ribonuclease P protein component from Blochmanniella floridana.